We begin with the raw amino-acid sequence, 301 residues long: Probable splicing factor ECU05_1440 (301 aa).

The RRM 1 domain maps to 1 to 70 (MQIFIGKIPN…APISVERANG (70 aa)). 2 disordered regions span residues 106-140 (PPMRYESRSPGRYDPRFSDRYGGRSPEYRGDSFRM) and 255-301 (SKDE…AEND). Basic and acidic residues-rich tracts occupy residues 110–140 (YESRSPGRYDPRFSDRYGGRSPEYRGDSFRM) and 255–270 (SKDEYKSRERESHMRS). The 74-residue stretch at 182 to 255 (LKVVFENIAP…HILKTRSYLS (74 aa)) folds into the RRM 2 domain.

The protein belongs to the splicing factor SR family.

It is found in the nucleus. Its function is as follows. Plays a role in splicing. This is Probable splicing factor ECU05_1440 from Encephalitozoon cuniculi (strain GB-M1) (Microsporidian parasite).